Consider the following 102-residue polypeptide: Large ribosomal subunit protein bL21 (102 aa).

Belongs to the bacterial ribosomal protein bL21 family. In terms of assembly, part of the 50S ribosomal subunit. Contacts protein L20.

In terms of biological role, this protein binds to 23S rRNA in the presence of protein L20. The chain is Large ribosomal subunit protein bL21 from Phytoplasma australiense.